A 291-amino-acid chain; its full sequence is MFKGSCVALITPFTEDGVNYEELRKLLEWHIKNHTDAILVCGTTGEGSTMTLEEKKEVIKFSVEVVNKRVPVIAGTGTNNTKASIELSKYAEEVGADMVLIITPYYNKTSQKGLYAHFNAINDAINIPIMLYNVPSRTGMNITPLMLDKLADLNNVVAIKEASGDLSQVAKMAELCGDRIAIYSGNDDQIVPILSLGGAGVVSVLANILPEETHNICEKYFLGEVIESRNLQLKYLSLANSLFIETNPIPVKTAMNLMNFNCGPLRLPLCEMEDSNLVILEENLKANGLIK.

Position 44 (Thr44) interacts with pyruvate. Tyr132 acts as the Proton donor/acceptor in catalysis. The Schiff-base intermediate with substrate role is filled by Lys160. Val202 provides a ligand contact to pyruvate.

Belongs to the DapA family. In terms of assembly, homotetramer; dimer of dimers.

The protein resides in the cytoplasm. The catalysed reaction is L-aspartate 4-semialdehyde + pyruvate = (2S,4S)-4-hydroxy-2,3,4,5-tetrahydrodipicolinate + H2O + H(+). It functions in the pathway amino-acid biosynthesis; L-lysine biosynthesis via DAP pathway; (S)-tetrahydrodipicolinate from L-aspartate: step 3/4. Catalyzes the condensation of (S)-aspartate-beta-semialdehyde [(S)-ASA] and pyruvate to 4-hydroxy-tetrahydrodipicolinate (HTPA). The polypeptide is 4-hydroxy-tetrahydrodipicolinate synthase (Clostridium perfringens (strain ATCC 13124 / DSM 756 / JCM 1290 / NCIMB 6125 / NCTC 8237 / Type A)).